Reading from the N-terminus, the 291-residue chain is 11-beta-hydroxysteroid dehydrogenase 1 (291 aa).

Over 1–7 (MAFMKTH) the chain is Cytoplasmic. A helical; Signal-anchor for type II membrane protein membrane pass occupies residues 8–24 (LLPILGLFMAYYYYSAY). Topologically, residues 25-291 (EEFRPEMLQG…TSYSTDGLIN (267 aa)) are lumenal. Residues 41–67 (GASK…TARS), 92–93 (TM), and 119–121 (NHI) each bind NADP(+). 2 N-linked (GlcNAc...) asparagine glycosylation sites follow: asparagine 123 and asparagine 162. Serine 170 provides a ligand contact to substrate. Catalysis depends on tyrosine 183, which acts as the Proton acceptor. 183–187 (YSASK) contributes to the NADP(+) binding site. The N-linked (GlcNAc...) asparagine glycan is linked to asparagine 207. 218-222 (IDTDT) serves as a coordination point for NADP(+).

The protein belongs to the short-chain dehydrogenases/reductases (SDR) family. Homodimer. In terms of tissue distribution, abundantly expressed in the liver, followed by fibroblasts, also detected in the brain, lung, heart, and ovary, and in smaller amounts in kidney, skin, and spleen.

The protein resides in the endoplasmic reticulum membrane. It catalyses the reaction an 11beta-hydroxysteroid + NADP(+) = an 11-oxosteroid + NADPH + H(+). The enzyme catalyses cortisone + NADPH + H(+) = cortisol + NADP(+). It carries out the reaction corticosterone + NADP(+) = 11-dehydrocorticosterone + NADPH + H(+). The catalysed reaction is a 7beta-hydroxysteroid + NADP(+) = a 7-oxosteroid + NADPH + H(+). It catalyses the reaction 7-oxocholesterol + NADPH + H(+) = 7beta-hydroxycholesterol + NADP(+). The enzyme catalyses chenodeoxycholate + NADP(+) = 7-oxolithocholate + NADPH + H(+). It carries out the reaction 7-oxolithocholate + NADPH + H(+) = ursodeoxycholate + NADP(+). The catalysed reaction is glycochenodeoxycholate + NADP(+) = 7-oxoglycolithocholate + NADPH + H(+). It catalyses the reaction taurochenodeoxycholate + NADP(+) = 7-oxotaurolithocholate + NADPH + H(+). The enzyme catalyses tauroursodeoxycholate + NADP(+) = 7-oxotaurolithocholate + NADPH + H(+). It carries out the reaction glycoursodeoxycholate + NADP(+) = 7-oxoglycolithocholate + NADPH + H(+). The catalysed reaction is 7-oxopregnenolone + NADPH + H(+) = 7beta-hydroxypregnenolone + NADP(+). It catalyses the reaction 3beta,7alpha-dihydroxyandrost-5-en-17-one + NADP(+) = 3beta-hydroxy-5-androstene-7,17-dione + NADPH + H(+). The enzyme catalyses 3beta-hydroxy-5-androstene-7,17-dione + NADPH + H(+) = 3beta,7beta-dihydroxyandrost-5-en-17-one + NADP(+). It carries out the reaction 3beta-hydroxy-5alpha-androstane-7,17-dione + NADPH + H(+) = 3beta,7beta-dihydroxy-5alpha-androstan-17-one + NADP(+). It functions in the pathway steroid metabolism. Functionally, controls the reversible conversion of biologically active glucocorticoids such as cortisone to cortisol, and 11-dehydrocorticosterone to corticosterone in the presence of NADP(H). Participates in the corticosteroid receptor-mediated anti-inflammatory response, as well as metabolic and homeostatic processes. Bidirectional in vitro, predominantly functions as a reductase in vivo, thereby increasing the concentration of active glucocorticoids. It has broad substrate specificity, besides glucocorticoids, it accepts other steroid and sterol substrates. Interconverts 7-oxo- and 7-hydroxy-neurosteroids such as 7-oxopregnenolone and 7beta-hydroxypregnenolone, 7-oxodehydroepiandrosterone (3beta-hydroxy-5-androstene-7,17-dione) and 7beta-hydroxydehydroepiandrosterone (3beta,7beta-dihydroxyandrost-5-en-17-one), among others. Catalyzes the stereo-specific conversion of the major dietary oxysterol, 7-ketocholesterol (7-oxocholesterol), into the more polar 7-beta-hydroxycholesterol metabolite. 7-oxocholesterol is one of the most important oxysterols, it participates in several events such as induction of apoptosis, accumulation in atherosclerotic lesions, lipid peroxidation, and induction of foam cell formation. Mediates the 7-oxo reduction of 7-oxolithocholate mainly to chenodeoxycholate, and to a lesser extent to ursodeoxycholate, both in its free form and when conjugated to glycine or taurine, providing a link between glucocorticoid activation and bile acid metabolism. Catalyzes the synthesis of 7-beta-25-dihydroxycholesterol from 7-oxo-25-hydroxycholesterol in vitro, which acts as a ligand for the G-protein-coupled receptor (GPCR) Epstein-Barr virus-induced gene 2 (EBI2) and may thereby regulate immune cell migration. The sequence is that of 11-beta-hydroxysteroid dehydrogenase 1 (HSD11B1) from Saimiri sciureus (Common squirrel monkey).